Here is a 101-residue protein sequence, read N- to C-terminus: Urease subunit beta (101 aa).

This sequence belongs to the urease beta subunit family. In terms of assembly, heterotrimer of UreA (gamma), UreB (beta) and UreC (alpha) subunits. Three heterotrimers associate to form the active enzyme.

Its subcellular location is the cytoplasm. The enzyme catalyses urea + 2 H2O + H(+) = hydrogencarbonate + 2 NH4(+). The protein operates within nitrogen metabolism; urea degradation; CO(2) and NH(3) from urea (urease route): step 1/1. The polypeptide is Urease subunit beta (Thermosynechococcus vestitus (strain NIES-2133 / IAM M-273 / BP-1)).